The sequence spans 1006 residues: DNA ligase 4 (1006 aa).

The interval 1–36 is disordered; that stretch reads MDSDDDYNGPADTNPRLEDEESDLDEKYPNRPRNHS. 10 residues coordinate ATP: Glu-318, Lys-320, Leu-321, Arg-325, Glu-387, Phe-427, Glu-487, Lys-492, Lys-509, and Lys-511. Lys-320 (N6-AMP-lysine intermediate) is an active-site residue. Glu-387 contributes to the Mg(2+) binding site. Glu-487 is a Mg(2+) binding site. BRCT domains are found at residues 718 to 811 and 890 to 1002; these read PSGN…PDSL and PSGW…GFQP.

The protein belongs to the ATP-dependent DNA ligase family. It depends on Mg(2+) as a cofactor.

It localises to the nucleus. It carries out the reaction ATP + (deoxyribonucleotide)n-3'-hydroxyl + 5'-phospho-(deoxyribonucleotide)m = (deoxyribonucleotide)n+m + AMP + diphosphate.. Functionally, DNA ligase involved in DNA non-homologous end joining (NHEJ); required for double-strand break (DSB) repair. The polypeptide is DNA ligase 4 (lig4) (Aspergillus oryzae (strain ATCC 42149 / RIB 40) (Yellow koji mold)).